A 1218-amino-acid polypeptide reads, in one-letter code: Coatomer subunit alpha-2 (1218 aa).

8 WD repeats span residues threonine 7–aspartate 48, glutamate 49–threonine 88, glycine 91–threonine 132, glycine 133–valine 172, glycine 202–valine 241, glycine 246–threonine 285, arginine 288–serine 326, and serine 363–alanine 404. The tract at residues methionine 855 to glutamate 876 is disordered. Residues phenylalanine 862 to glutamate 876 show a composition bias toward acidic residues.

In terms of assembly, oligomeric complex that consists of at least the alpha, beta, beta', gamma, delta, epsilon and zeta subunits.

It localises to the cytoplasm. Its subcellular location is the golgi apparatus membrane. It is found in the cytoplasmic vesicle. The protein localises to the COPI-coated vesicle membrane. The coatomer is a cytosolic protein complex that binds to dilysine motifs and reversibly associates with Golgi non-clathrin-coated vesicles, which further mediate biosynthetic protein transport from the ER, via the Golgi up to the trans Golgi network. Coatomer complex is required for budding from Golgi membranes, and is essential for the retrograde Golgi-to-ER transport of dilysine-tagged proteins. This Oryza sativa subsp. japonica (Rice) protein is Coatomer subunit alpha-2.